The sequence spans 240 residues: Axial regulator YABBY 3 (240 aa).

A C4-type zinc finger spans residues 30–57; it reads CSFCDTVLAVSVPPSSLFKTVTVRCGHC. The interval 135-156 is disordered; that stretch reads DHLQEMPRPPPANRPPEKRQRV.

The protein belongs to the YABBY family. In terms of assembly, interacts with SPL/NZZ. Interacts with SPEAR2. Binds to LUG and LUH; these complexes promote adaxial cell identity in leaves as well as embryonic shoot apical meristem (SAM) initiation and postembryonic SAM maintenance. As to expression, expressed in abaxial regions of lateral aerial organ primordia leading to cotyledons, leaves, flower meristems, sepals, petals, stamen and carpels, but not in roots.

It localises to the nucleus. Its function is as follows. Involved in the abaxial cell fate determination during embryogenesis and organogenesis. Regulates the initiation of embryonic shoot apical meristem (SAM) development. Contributes to the repression of KNOX genes (STM, KNAT1/BP and KNAT2) to avoid ectopic meristems. Binds DNA without sequence specificity. This chain is Axial regulator YABBY 3 (YAB3), found in Arabidopsis thaliana (Mouse-ear cress).